Reading from the N-terminus, the 250-residue chain is 3-deoxy-manno-octulosonate cytidylyltransferase (250 aa).

This sequence belongs to the KdsB family.

It is found in the cytoplasm. The catalysed reaction is 3-deoxy-alpha-D-manno-oct-2-ulosonate + CTP = CMP-3-deoxy-beta-D-manno-octulosonate + diphosphate. The protein operates within nucleotide-sugar biosynthesis; CMP-3-deoxy-D-manno-octulosonate biosynthesis; CMP-3-deoxy-D-manno-octulosonate from 3-deoxy-D-manno-octulosonate and CTP: step 1/1. Its pathway is bacterial outer membrane biogenesis; lipopolysaccharide biosynthesis. Its function is as follows. Activates KDO (a required 8-carbon sugar) for incorporation into bacterial lipopolysaccharide in Gram-negative bacteria. This is 3-deoxy-manno-octulosonate cytidylyltransferase from Legionella pneumophila subsp. pneumophila (strain Philadelphia 1 / ATCC 33152 / DSM 7513).